The following is a 260-amino-acid chain: Dolichol-phosphate mannosyltransferase subunit 1 (260 aa).

Residues 1–25 form a disordered region; the sequence is MASTGASRSLAASPRPPQGRSSRQD. A2 carries the N-acetylalanine modification. Phosphoserine occurs at positions 3 and 9. GDP-alpha-D-mannose contacts are provided by P32, Y34, E36, I63, D65, D118, A119, D120, R147, R234, and K240. D120 contacts Mg(2+). D120 is a binding site for Mn(2+).

The protein belongs to the glycosyltransferase 2 family. As to quaternary structure, component of the dolichol-phosphate mannose (DPM) synthase complex composed of DPM1, DPM2 and DPM3; within the complex, directly interacts with DPM3. This interaction may stabilize DPM1. The cofactor is Mg(2+). It depends on Mn(2+) as a cofactor. Ca(2+) is required as a cofactor.

The protein localises to the endoplasmic reticulum. It catalyses the reaction a di-trans,poly-cis-dolichyl phosphate + GDP-alpha-D-mannose = a di-trans,poly-cis-dolichyl beta-D-mannosyl phosphate + GDP. It functions in the pathway protein modification; protein glycosylation. Its function is as follows. Transfers mannose from GDP-mannose to dolichol monophosphate to form dolichol phosphate mannose (Dol-P-Man) which is the mannosyl donor in pathways leading to N-glycosylation, glycosyl phosphatidylinositol membrane anchoring, and O-mannosylation of proteins; catalytic subunit of the dolichol-phosphate mannose (DPM) synthase complex. The sequence is that of Dolichol-phosphate mannosyltransferase subunit 1 (Dpm1) from Mus musculus (Mouse).